Reading from the N-terminus, the 266-residue chain is Type II iodothyronine deiodinase (266 aa).

Topologically, residues 1–9 (MGLLSVDLL) are lumenal. A helical; Signal-anchor for type III membrane protein transmembrane segment spans residues 10–34 (ITLQILPVFFSNCLFLALYDSVILL). Topologically, residues 35–266 (KHVALLLSRS…KNFSKRUILD (232 aa)) are cytoplasmic. Residue Sec-130 is part of the active site. Non-standard amino acids (selenocysteine) are located at Sec-130 and Sec-263.

Belongs to the iodothyronine deiodinase family. Predominantly monomer. Can form homodimers but homodimerization is not essential for enzyme activity. Interacts with USP20 and USP33. Interacts with MARCHF6. Ubiquitinated by MARCHF6, leading to its degradation by the proteasome. Deubiquitinated by USP20 and USP33. As to expression, expressed in cerebral cortex, cerebellum, pituitary gland, mostly in anterior pituitary gland, and pineal gland, as well as in brown adipose tissue (BAT).

It is found in the endoplasmic reticulum membrane. The catalysed reaction is 3,3',5-triiodo-L-thyronine + iodide + A + H(+) = L-thyroxine + AH2. The enzyme catalyses 3,3'-diiodo-L-thyronine + iodide + A + H(+) = 3,3',5'-triiodo-L-thyronine + AH2. It catalyses the reaction 3'-iodo-L-thyronine + iodide + A + H(+) = 3',5'-diiodo-L-thyronine + AH2. It carries out the reaction 3,3'-diiodothyronamine + iodide + A + H(+) = 3,3',5'-triiodothyronamine + AH2. The catalysed reaction is 3'-iodothyronamine + iodide + A + H(+) = 3',5'-diiodothyronamine + AH2. Its function is as follows. Plays a crucial role in the metabolism of thyroid hormones (TH) and has specific roles in TH activation and inactivation by deiodination. Catalyzes the deiodination of L-thyroxine (T4) to 3,5,3'-triiodothyronine (T3) and 3',5'-diiodothyronine (3',5'-T2) to 3'-monoiodothyronine (3'-T1) via outer-ring deiodination (ORD). Catalyzes the deiodination of 3,3',5'-triiodothyronine (rT3) to 3,3'-diiodothyronine (3,3'-T2) via ORD. Catalyzes the phenolic ring deiodinations of 3,3',5'-triiodothyronamine and 3',5'- diiodothyronamine. This Rattus norvegicus (Rat) protein is Type II iodothyronine deiodinase (Dio2).